The following is a 268-amino-acid chain: 4-hydroxy-tetrahydrodipicolinate reductase (268 aa).

NAD(+)-binding positions include 7–12 (GAGGRM) and Glu33. Residue Arg34 coordinates NADP(+). NAD(+) contacts are provided by residues 97-99 (GTT) and 121-124 (SGNM). His155 serves as the catalytic Proton donor/acceptor. Position 156 (His156) interacts with (S)-2,3,4,5-tetrahydrodipicolinate. Residue Lys159 is the Proton donor of the active site. 165-166 (GT) lines the (S)-2,3,4,5-tetrahydrodipicolinate pocket.

This sequence belongs to the DapB family.

The protein localises to the cytoplasm. The catalysed reaction is (S)-2,3,4,5-tetrahydrodipicolinate + NAD(+) + H2O = (2S,4S)-4-hydroxy-2,3,4,5-tetrahydrodipicolinate + NADH + H(+). The enzyme catalyses (S)-2,3,4,5-tetrahydrodipicolinate + NADP(+) + H2O = (2S,4S)-4-hydroxy-2,3,4,5-tetrahydrodipicolinate + NADPH + H(+). Its pathway is amino-acid biosynthesis; L-lysine biosynthesis via DAP pathway; (S)-tetrahydrodipicolinate from L-aspartate: step 4/4. Its function is as follows. Catalyzes the conversion of 4-hydroxy-tetrahydrodipicolinate (HTPA) to tetrahydrodipicolinate. This chain is 4-hydroxy-tetrahydrodipicolinate reductase, found in Brucella abortus (strain 2308).